A 568-amino-acid chain; its full sequence is Sentrin-specific protease 3 (568 aa).

The tract at residues Met1–Arg119 is disordered. Phosphoserine is present on residues Ser52, Ser71, and Ser73. Acidic residues predominate over residues Ala72 to Val87. Residues Arg106–Arg119 show a composition bias toward basic residues. 2 consecutive short sequence motifs (nuclear localization signal) follow at residues Arg119–Arg122 and Arg147–Arg153. The interval Leu155–Pro174 is disordered. Ser163 carries the phosphoserine modification. Thr170 is modified (phosphothreonine). Phosphoserine is present on residues Ser175, Ser182, Ser206, and Ser226. Residues His380 to Leu537 are protease. Residues His459 and Asp476 contribute to the active site. Residue Cys526 is the Nucleophile of the active site.

This sequence belongs to the peptidase C48 family. In terms of assembly, component of some MLL1/MLL complex, at least composed of the core components KMT2A/MLL1, ASH2L, HCFC1/HCF1, WDR5 and RBBP5, as well as the facultative components BACC1, CHD8, E2F6, HSP70, INO80C, KANSL1, LAS1L, MAX, MCRS1, MGA, MYST1/MOF, PELP1, PHF20, PRP31, RING2, RUVB1/TIP49A, RUVB2/TIP49B, SENP3, TAF1, TAF4, TAF6, TAF7, TAF9 and TEX10. Interacts with EP300, NPM1 and CDCA8. Component of the 5FMC complex, at least composed of PELP1, LAS1L, TEX10, WDR18 and SENP3; the complex interacts with methylated CHTOP and ZNF148. Interacts with NOL9. Interacts with CCAR2.

The protein localises to the nucleus. The protein resides in the nucleolus. It localises to the nucleoplasm. It is found in the cytoplasm. Its activity is regulated as follows. On oxidative stress, SENP3 degradation is blocked by inhibition of its ubiquitination, which stabilizes it as it accumulates in the nucleoplasm. In terms of biological role, protease that releases SUMO2 and SUMO3 monomers from sumoylated substrates, but has only weak activity against SUMO1 conjugates. Deconjugates SUMO2 from MEF2D, which increases its transcriptional activation capability. Deconjugates SUMO2 and SUMO3 from CDCA8. Redox sensor that, when redistributed into nucleoplasm, can act as an effector to enhance HIF1A transcriptional activity by desumoylating EP300. Required for rRNA processing through deconjugation of SUMO2 and SUMO3 from nucleophosmin, NPM1. Plays a role in the regulation of sumoylation status of ZNF148. Functions as a component of the Five Friends of Methylated CHTOP (5FMC) complex; the 5FMC complex is recruited to ZNF148 by methylated CHTOP, leading to desumoylation of ZNF148 and subsequent transactivation of ZNF148 target genes. Deconjugates SUMO2 from KAT5. Catalyzes desumoylation of MRE11. This is Sentrin-specific protease 3 (Senp3) from Mus musculus (Mouse).